The following is a 175-amino-acid chain: Adenine phosphoribosyltransferase (175 aa).

It belongs to the purine/pyrimidine phosphoribosyltransferase family. In terms of assembly, homodimer.

The protein resides in the cytoplasm. The catalysed reaction is AMP + diphosphate = 5-phospho-alpha-D-ribose 1-diphosphate + adenine. It functions in the pathway purine metabolism; AMP biosynthesis via salvage pathway; AMP from adenine: step 1/1. Functionally, catalyzes a salvage reaction resulting in the formation of AMP, that is energically less costly than de novo synthesis. In Clavibacter michiganensis subsp. michiganensis (strain NCPPB 382), this protein is Adenine phosphoribosyltransferase.